The chain runs to 45 residues: uncharacterized protein (45 aa).

The interval 18–45 is disordered; it reads RRGRIGVQPSPERRSEVVGPFPLARSLS.

This is an uncharacterized protein from Homo sapiens (Human).